Consider the following 212-residue polypeptide: Adenylate kinase (212 aa).

An ATP-binding site is contributed by 10–15 (GAGKGT). The NMP stretch occupies residues 30–59 (ALGDIFRTIIKTSTSEAELINNYVKQGELV). Residues Arg-36, 57 to 59 (ELV), 85 to 88 (GYPR), and Gln-92 each bind AMP. An LID region spans residues 122-160 (GRYSCKNCRKIYNSYFLQPKTDNVCDVCGSSTFDYRKDD). Residue Arg-123 participates in ATP binding. Cys-126 and Cys-129 together coordinate Zn(2+). An ATP-binding site is contributed by 132–133 (IY). Zn(2+)-binding residues include Cys-146 and Cys-149. Arg-157 and Arg-168 together coordinate AMP. Lys-196 is a binding site for ATP.

This sequence belongs to the adenylate kinase family. Monomer.

It localises to the cytoplasm. The enzyme catalyses AMP + ATP = 2 ADP. It participates in purine metabolism; AMP biosynthesis via salvage pathway; AMP from ADP: step 1/1. In terms of biological role, catalyzes the reversible transfer of the terminal phosphate group between ATP and AMP. Plays an important role in cellular energy homeostasis and in adenine nucleotide metabolism. The protein is Adenylate kinase of Rickettsia akari (strain Hartford).